Here is a 434-residue protein sequence, read N- to C-terminus: Alpha-enolase (434 aa).

Position 2 is an N-acetylserine (serine 2). N6-acetyllysine is present on lysine 5. Residue serine 27 is modified to Phosphoserine. Serine 40 is a binding site for Mg(2+). Tyrosine 44 is subject to Phosphotyrosine. Lysine 60 is subject to N6-acetyllysine; alternate. Lysine 60 carries the N6-succinyllysine; alternate modification. An N6-acetyllysine mark is found at lysine 64 and lysine 71. N6-acetyllysine; alternate is present on lysine 89. Lysine 89 bears the N6-succinyllysine; alternate mark. An N6-acetyllysine mark is found at lysine 92 and lysine 126. Substrate contacts are provided by histidine 158 and glutamate 167. Residues lysine 193 and lysine 199 each carry the N6-acetyllysine modification. Lysine 202 carries the N6-acetyllysine; alternate modification. Lysine 202 is covalently cross-linked (Glycyl lysine isopeptide (Lys-Gly) (interchain with G-Cter in SUMO2); alternate). Glutamate 210 functions as the Proton donor in the catalytic mechanism. Lysine 228 and lysine 233 each carry N6-acetyllysine; alternate. At lysine 228 the chain carries N6-succinyllysine; alternate. N6-(2-hydroxyisobutyryl)lysine; alternate is present on lysine 228. Lysine 233 is modified (N6-malonyllysine; alternate). Aspartate 245 contributes to the Mg(2+) binding site. Position 254 is a phosphoserine (serine 254). The residue at position 256 (lysine 256) is an N6-acetyllysine. Serine 263 and serine 272 each carry phosphoserine. Residue lysine 281 is modified to N6-acetyllysine; alternate. Residue lysine 281 is modified to N6-(2-hydroxyisobutyryl)lysine; alternate. At lysine 285 the chain carries N6-acetyllysine. Position 287 is a phosphotyrosine (tyrosine 287). Residue serine 291 is modified to Phosphoserine. Mg(2+) contacts are provided by glutamate 293 and aspartate 318. Glutamate 293 and aspartate 318 together coordinate substrate. 2 positions are modified to N6-acetyllysine: lysine 335 and lysine 343. Catalysis depends on lysine 343, which acts as the Proton acceptor. Residues 370 to 373 and lysine 394 each bind substrate; that span reads SHRS. Residues 405–434 are required for interaction with PLG; that stretch reads AKYNQLLRIEEELGSKAKFAGRNFRNPLAK. Position 406 is an N6-acetyllysine (lysine 406). Position 420 is an N6-acetyllysine; alternate (lysine 420). Lysine 420 carries the N6-succinyllysine; alternate modification. Position 420 is an N6-malonyllysine; alternate (lysine 420).

It belongs to the enolase family. As to quaternary structure, mammalian enolase is composed of 3 isozyme subunits, alpha, beta and gamma, which can form homodimers or heterodimers which are cell-type and development-specific. ENO1 interacts with PLG in the neuronal plasma membrane and promotes its activation. The C-terminal lysine is required for this binding. Interacts with ENO4 and PGAM2. Interacts with CMTM6. It depends on Mg(2+) as a cofactor. ISGylated. In terms of processing, lysine 2-hydroxyisobutyrylation (Khib) by p300/EP300 activates the phosphopyruvate hydratase activity.

The protein resides in the cytoplasm. The protein localises to the cell membrane. It catalyses the reaction (2R)-2-phosphoglycerate = phosphoenolpyruvate + H2O. It participates in carbohydrate degradation; glycolysis; pyruvate from D-glyceraldehyde 3-phosphate: step 4/5. Its function is as follows. Glycolytic enzyme the catalyzes the conversion of 2-phosphoglycerate to phosphoenolpyruvate. In addition to glycolysis, involved in various processes such as growth control, hypoxia tolerance and allergic responses. May also function in the intravascular and pericellular fibrinolytic system due to its ability to serve as a receptor and activator of plasminogen on the cell surface of several cell-types such as leukocytes and neurons. Stimulates immunoglobulin production. This chain is Alpha-enolase (ENO1), found in Macaca fascicularis (Crab-eating macaque).